The sequence spans 134 residues: Ribonuclease VapC1 (134 aa).

The PINc domain maps to 3-132 (YMLDTNIIIY…RITDLQWQDW (130 aa)). Residues aspartate 6 and aspartate 99 each contribute to the Mg(2+) site.

It belongs to the PINc/VapC protein family. Requires Mg(2+) as cofactor.

In terms of biological role, toxic component of a type II toxin-antitoxin (TA) system. Acts as an RNase, its toxic effect is neutralized by VapB1 antitoxin. This is Ribonuclease VapC1 from Haemophilus influenzae (strain ATCC 51907 / DSM 11121 / KW20 / Rd).